A 534-amino-acid chain; its full sequence is Coiled-coil domain-containing protein 183 (534 aa).

Coiled-coil stretches lie at residues 10–54 (EAQI…NLRR), 136–209 (DATK…DMTV), and 321–406 (RFLA…LLVI).

This is Coiled-coil domain-containing protein 183 (Ccdc183) from Mus musculus (Mouse).